A 36-amino-acid chain; its full sequence is Egg-laying-like hormone (36 aa).

Lys-36 is modified (lysine amide).

Supra, subesophageal ganglia and segmental ganglia of the ventral nerve cord and brain.

Functionally, may be involved in leech reproduction. This Theromyzon tessulatum (Duck leech) protein is Egg-laying-like hormone.